The chain runs to 161 residues: RNA pyrophosphohydrolase (161 aa).

A Nudix hydrolase domain is found at 12 to 154; the sequence is PYRPGVGMMI…KRKLYQAVVK (143 aa). The Nudix box motif lies at 46–67; that stretch reads GGIVPGETPSIAAMREMLEEIG.

It belongs to the Nudix hydrolase family. RppH subfamily. It depends on a divalent metal cation as a cofactor.

Accelerates the degradation of transcripts by removing pyrophosphate from the 5'-end of triphosphorylated RNA, leading to a more labile monophosphorylated state that can stimulate subsequent ribonuclease cleavage. The sequence is that of RNA pyrophosphohydrolase from Rickettsia africae (strain ESF-5).